Here is a 543-residue protein sequence, read N- to C-terminus: Glutamyl-tRNA(Gln) amidotransferase subunit A, chloroplastic/mitochondrial (543 aa).

Catalysis depends on charge relay system residues Lys-123 and Ser-198. The active-site Acyl-ester intermediate is the Ser-222.

This sequence belongs to the amidase family. GatA subfamily. In terms of assembly, subunit of the heterotrimeric GatCAB amidotransferase (AdT) complex, composed of A, B and C subunits.

It localises to the mitochondrion. The protein localises to the plastid. Its subcellular location is the chloroplast stroma. It catalyses the reaction L-glutamyl-tRNA(Gln) + L-glutamine + ATP + H2O = L-glutaminyl-tRNA(Gln) + L-glutamate + ADP + phosphate + H(+). Functionally, allows the formation of correctly charged Gln-tRNA(Gln) through the transamidation of misacylated Glu-tRNA(Gln) in chloroplasts and mitochondria. The reaction takes place in the presence of glutamine and ATP through an activated gamma-phospho-Glu-tRNA(Gln). The polypeptide is Glutamyl-tRNA(Gln) amidotransferase subunit A, chloroplastic/mitochondrial (Oryza sativa subsp. japonica (Rice)).